Consider the following 721-residue polypeptide: Dipeptidyl-peptidase 5 (721 aa).

An N-terminal signal peptide occupies residues 1–18 (MGAFRWLSIAAAASTALA). N-linked (GlcNAc...) asparagine glycosylation is found at N75, N94, N151, and N254. The segment at 271–297 (ARPINGPDSPGTPKGIKGDSSSPVFSP) is disordered. N-linked (GlcNAc...) asparagine glycosylation is found at N380 and N450. The active-site Charge relay system is S560. An N-linked (GlcNAc...) asparagine glycan is attached at N607. Active-site charge relay system residues include D643 and H675.

Belongs to the peptidase S9C family. In terms of processing, N-glycosylated. Expressed in mycelia and conidia.

The protein resides in the secreted. Functionally, may be involved in metabolism of dipeptides or may affect host defense mechanisms. Has a substrate specificity limited to the hydrolysis of X-Ala, His-Ser, and Ser-Tyr dipeptides at a neutral pH optimum. The sequence is that of Dipeptidyl-peptidase 5 from Aspergillus fumigatus (strain ATCC MYA-4609 / CBS 101355 / FGSC A1100 / Af293) (Neosartorya fumigata).